We begin with the raw amino-acid sequence, 352 residues long: Photosystem II D2 protein (352 aa).

Residues 40–60 (CAYLALGGWLTGTTFVTSWYT) traverse the membrane as a helical segment. Residue His-117 participates in chlorophyll a binding. The helical transmembrane segment at 124–140 (GFMLRQFEIARLVGVRP) threads the bilayer. Positions 129 and 142 each coordinate pheophytin a. The helical transmembrane segment at 152–165 (VFVSVFLIYPLGQS) threads the bilayer. A chlorophyll a-binding site is contributed by His-197. Residues 207-227 (GALLCAIHGATVENTLFQDGE) form a helical membrane-spanning segment. The a plastoquinone site is built by His-214 and Phe-261. A Fe cation-binding site is contributed by His-214. His-268 lines the Fe cation pocket. A helical transmembrane segment spans residues 278 to 294 (GLWMSSIGVVGLALNLR).

It belongs to the reaction center PufL/M/PsbA/D family. In terms of assembly, PSII is composed of 1 copy each of membrane proteins PsbA, PsbB, PsbC, PsbD, PsbE, PsbF, PsbH, PsbI, PsbJ, PsbK, PsbL, PsbM, PsbT, PsbX, PsbY, PsbZ, Psb30/Ycf12, peripheral proteins PsbO, CyanoQ (PsbQ), PsbU, PsbV and a large number of cofactors. It forms dimeric complexes. The cofactor is The D1/D2 heterodimer binds P680, chlorophylls that are the primary electron donor of PSII, and subsequent electron acceptors. It shares a non-heme iron and each subunit binds pheophytin, quinone, additional chlorophylls, carotenoids and lipids. There is also a Cl(-1) ion associated with D1 and D2, which is required for oxygen evolution. The PSII complex binds additional chlorophylls, carotenoids and specific lipids..

The protein resides in the cellular thylakoid membrane. The catalysed reaction is 2 a plastoquinone + 4 hnu + 2 H2O = 2 a plastoquinol + O2. In terms of biological role, photosystem II (PSII) is a light-driven water:plastoquinone oxidoreductase that uses light energy to abstract electrons from H(2)O, generating O(2) and a proton gradient subsequently used for ATP formation. It consists of a core antenna complex that captures photons, and an electron transfer chain that converts photonic excitation into a charge separation. The D1/D2 (PsbA/PsbD) reaction center heterodimer binds P680, the primary electron donor of PSII as well as several subsequent electron acceptors. D2 is needed for assembly of a stable PSII complex. The chain is Photosystem II D2 protein from Synechococcus sp. (strain JA-2-3B'a(2-13)) (Cyanobacteria bacterium Yellowstone B-Prime).